Consider the following 207-residue polypeptide: Small ribosomal subunit protein uS4 (207 aa).

Residues 31-53 form a disordered region; that stretch reads KAKFDSKPGQHGRTSGARTSDYG. In terms of domain architecture, S4 RNA-binding spans 97–157; it reads CRLDNVVYRM…EKSKKQARIV (61 aa).

It belongs to the universal ribosomal protein uS4 family. Part of the 30S ribosomal subunit. Contacts protein S5. The interaction surface between S4 and S5 is involved in control of translational fidelity.

One of the primary rRNA binding proteins, it binds directly to 16S rRNA where it nucleates assembly of the body of the 30S subunit. Its function is as follows. With S5 and S12 plays an important role in translational accuracy. In Acidovorax ebreus (strain TPSY) (Diaphorobacter sp. (strain TPSY)), this protein is Small ribosomal subunit protein uS4.